The chain runs to 194 residues: Oligoribonuclease (194 aa).

The Exonuclease domain occupies L11–L174. The active site involves Y132.

It belongs to the oligoribonuclease family.

The protein resides in the cytoplasm. Its function is as follows. 3'-to-5' exoribonuclease specific for small oligoribonucleotides. This Xanthomonas axonopodis pv. citri (strain 306) protein is Oligoribonuclease.